The chain runs to 690 residues: Elongation factor G (690 aa).

The tr-type G domain maps to 8–283 (SKCRNIGIMA…AVVDYLPSPN (276 aa)). GTP contacts are provided by residues 17–24 (AHIDAGKT), 81–85 (DTPGH), and 135–138 (NKMD).

This sequence belongs to the TRAFAC class translation factor GTPase superfamily. Classic translation factor GTPase family. EF-G/EF-2 subfamily.

It is found in the cytoplasm. Catalyzes the GTP-dependent ribosomal translocation step during translation elongation. During this step, the ribosome changes from the pre-translocational (PRE) to the post-translocational (POST) state as the newly formed A-site-bound peptidyl-tRNA and P-site-bound deacylated tRNA move to the P and E sites, respectively. Catalyzes the coordinated movement of the two tRNA molecules, the mRNA and conformational changes in the ribosome. In Anaplasma phagocytophilum (strain HZ), this protein is Elongation factor G.